Here is a 430-residue protein sequence, read N- to C-terminus: Serine--tRNA ligase (430 aa).

237–239 (TAE) contributes to the L-serine binding site. 268–270 (RAE) lines the ATP pocket. Glutamate 291 lines the L-serine pocket. An ATP-binding site is contributed by 355–358 (EVSS). Serine 391 lines the L-serine pocket.

The protein belongs to the class-II aminoacyl-tRNA synthetase family. Type-1 seryl-tRNA synthetase subfamily. In terms of assembly, homodimer. The tRNA molecule binds across the dimer.

The protein resides in the cytoplasm. It catalyses the reaction tRNA(Ser) + L-serine + ATP = L-seryl-tRNA(Ser) + AMP + diphosphate + H(+). The catalysed reaction is tRNA(Sec) + L-serine + ATP = L-seryl-tRNA(Sec) + AMP + diphosphate + H(+). Its pathway is aminoacyl-tRNA biosynthesis; selenocysteinyl-tRNA(Sec) biosynthesis; L-seryl-tRNA(Sec) from L-serine and tRNA(Sec): step 1/1. In terms of biological role, catalyzes the attachment of serine to tRNA(Ser). Is also able to aminoacylate tRNA(Sec) with serine, to form the misacylated tRNA L-seryl-tRNA(Sec), which will be further converted into selenocysteinyl-tRNA(Sec). This Baumannia cicadellinicola subsp. Homalodisca coagulata protein is Serine--tRNA ligase.